A 177-amino-acid polypeptide reads, in one-letter code: ATP synthase subunit delta (177 aa).

The protein belongs to the ATPase delta chain family. In terms of assembly, F-type ATPases have 2 components, F(1) - the catalytic core - and F(0) - the membrane proton channel. F(1) has five subunits: alpha(3), beta(3), gamma(1), delta(1), epsilon(1). F(0) has three main subunits: a(1), b(2) and c(10-14). The alpha and beta chains form an alternating ring which encloses part of the gamma chain. F(1) is attached to F(0) by a central stalk formed by the gamma and epsilon chains, while a peripheral stalk is formed by the delta and b chains.

The protein resides in the cell inner membrane. Its function is as follows. F(1)F(0) ATP synthase produces ATP from ADP in the presence of a proton or sodium gradient. F-type ATPases consist of two structural domains, F(1) containing the extramembraneous catalytic core and F(0) containing the membrane proton channel, linked together by a central stalk and a peripheral stalk. During catalysis, ATP synthesis in the catalytic domain of F(1) is coupled via a rotary mechanism of the central stalk subunits to proton translocation. Functionally, this protein is part of the stalk that links CF(0) to CF(1). It either transmits conformational changes from CF(0) to CF(1) or is implicated in proton conduction. The polypeptide is ATP synthase subunit delta (Shewanella pealeana (strain ATCC 700345 / ANG-SQ1)).